The chain runs to 238 residues: Orotidine 5'-phosphate decarboxylase (238 aa).

Substrate-binding positions include Asp10, Lys32, 59 to 68, Thr122, Arg184, Gln193, Gly213, and Arg214; that span reads DLKLHDIPNT. The active-site Proton donor is Lys61.

It belongs to the OMP decarboxylase family. Type 1 subfamily. As to quaternary structure, homodimer.

It catalyses the reaction orotidine 5'-phosphate + H(+) = UMP + CO2. It participates in pyrimidine metabolism; UMP biosynthesis via de novo pathway; UMP from orotate: step 2/2. Catalyzes the decarboxylation of orotidine 5'-monophosphate (OMP) to uridine 5'-monophosphate (UMP). The chain is Orotidine 5'-phosphate decarboxylase from Bacillus cytotoxicus (strain DSM 22905 / CIP 110041 / 391-98 / NVH 391-98).